Consider the following 332-residue polypeptide: 2,3-diketo-L-gulonate reductase (332 aa).

The Proton donor role is filled by His-44. Residues 168 to 174 (ITMVDMS), 224 to 225 (WK), and 304 to 306 (GHE) each bind NAD(+).

It belongs to the LDH2/MDH2 oxidoreductase family. DlgD subfamily. Homodimer.

It is found in the cytoplasm. It catalyses the reaction 3-dehydro-L-gulonate + NAD(+) = 2,3-dioxo-L-gulonate + NADH + H(+). It carries out the reaction 3-dehydro-L-gulonate + NADP(+) = 2,3-dioxo-L-gulonate + NADPH + H(+). Catalyzes the reduction of 2,3-diketo-L-gulonate in the presence of NADH, to form 3-keto-L-gulonate. The protein is 2,3-diketo-L-gulonate reductase of Salmonella newport (strain SL254).